A 393-amino-acid polypeptide reads, in one-letter code: UDP-galactose translocator (393 aa).

The next 10 membrane-spanning stretches (helical) occupy residues 3-23 (AVGS…AGAL), 37-57 (YISL…IRYA), 65-85 (FFAT…CLLL), 97-117 (LVLF…KLAV), 140-160 (TFQV…VLML), 169-189 (WASL…QAGG), 200-220 (GVGL…GVYF), 238-258 (LGLF…GTAV), 269-289 (PAVW…AVVV), and 315-335 (LFGF…IGAV). Positions 353-393 (APTSGPCTHQQPPGQPPPPQLSSHHGDLSTEPFLPKSVLVK) are disordered.

It belongs to the nucleotide-sugar transporter family. SLC35A subfamily. In terms of assembly, interacts with SLC35A3; the interaction is reduced in the presence of SLC35A4. Found in a complex with SLC35A3 and SLC35A4.

The protein resides in the golgi apparatus membrane. It catalyses the reaction UMP(out) + UDP-alpha-D-galactose(in) = UMP(in) + UDP-alpha-D-galactose(out). It carries out the reaction UDP-N-acetyl-alpha-D-galactosamine(in) + UMP(out) = UDP-N-acetyl-alpha-D-galactosamine(out) + UMP(in). The catalysed reaction is UMP(out) + UDP-alpha-D-glucose(in) = UMP(in) + UDP-alpha-D-glucose(out). The enzyme catalyses UMP(out) + UDP-N-acetyl-alpha-D-glucosamine(in) = UMP(in) + UDP-N-acetyl-alpha-D-glucosamine(out). It catalyses the reaction UDP-alpha-D-galactose(in) + AMP(out) = UDP-alpha-D-galactose(out) + AMP(in). It carries out the reaction UDP-alpha-D-galactose(in) + CMP(out) = UDP-alpha-D-galactose(out) + CMP(in). The catalysed reaction is UDP-N-acetyl-alpha-D-galactosamine(out) + UDP-alpha-D-galactose(in) = UDP-N-acetyl-alpha-D-galactosamine(in) + UDP-alpha-D-galactose(out). The enzyme catalyses UDP-N-acetyl-alpha-D-glucosamine(out) + UDP-alpha-D-galactose(in) = UDP-N-acetyl-alpha-D-glucosamine(in) + UDP-alpha-D-galactose(out). It catalyses the reaction UDP-alpha-D-galactose(in) + UDP-alpha-D-glucose(out) = UDP-alpha-D-galactose(out) + UDP-alpha-D-glucose(in). It carries out the reaction UMP(out) + CMP(in) = UMP(in) + CMP(out). The catalysed reaction is UMP(out) + AMP(in) = UMP(in) + AMP(out). Its function is as follows. Transports uridine diphosphate galactose (UDP-galactose) from the cytosol into the Golgi apparatus, functioning as an antiporter that exchanges UDP-galactose for UMP. It is also able to exchange UDP-galactose for AMP and CMP, and to transport UDP-N-acetylgalactosamine (UDP-GalNAc) and other nucleotide sugars. As a provider of UDP-galactose to galactosyltransferases present in the Golgi apparatus, it is necessary for globotriaosylceramide/globoside (Gb3Cer) synthesis from lactosylceramide. This Bos taurus (Bovine) protein is UDP-galactose translocator.